The primary structure comprises 200 residues: Potassium-transporting ATPase KdpC subunit (200 aa).

The helical transmembrane segment at 7-27 threads the bilayer; that stretch reads PALVMIVLFTILTGLIYPLAM.

This sequence belongs to the KdpC family. In terms of assembly, the system is composed of three essential subunits: KdpA, KdpB and KdpC.

Its subcellular location is the cell inner membrane. Functionally, part of the high-affinity ATP-driven potassium transport (or Kdp) system, which catalyzes the hydrolysis of ATP coupled with the electrogenic transport of potassium into the cytoplasm. This subunit acts as a catalytic chaperone that increases the ATP-binding affinity of the ATP-hydrolyzing subunit KdpB by the formation of a transient KdpB/KdpC/ATP ternary complex. In Methylocella silvestris (strain DSM 15510 / CIP 108128 / LMG 27833 / NCIMB 13906 / BL2), this protein is Potassium-transporting ATPase KdpC subunit.